The following is a 166-amino-acid chain: Endoribonuclease YbeY (166 aa).

Zn(2+)-binding residues include His132, His136, and His142.

The protein belongs to the endoribonuclease YbeY family. The cofactor is Zn(2+).

It is found in the cytoplasm. In terms of biological role, single strand-specific metallo-endoribonuclease involved in late-stage 70S ribosome quality control and in maturation of the 3' terminus of the 16S rRNA. This is Endoribonuclease YbeY from Clostridium botulinum (strain Langeland / NCTC 10281 / Type F).